The following is a 200-amino-acid chain: Cytochrome c biogenesis ATP-binding export protein CcmA (200 aa).

The ABC transporter domain maps to 1-200 (MRLSGRGLRC…TREMRIGAAA (200 aa)). Position 35–42 (35–42 (GRNGAGKT)) interacts with ATP.

Belongs to the ABC transporter superfamily. CcmA exporter (TC 3.A.1.107) family. The complex is composed of two ATP-binding proteins (CcmA) and two transmembrane proteins (CcmB).

The protein localises to the cell inner membrane. It carries out the reaction heme b(in) + ATP + H2O = heme b(out) + ADP + phosphate + H(+). Functionally, part of the ABC transporter complex CcmAB involved in the biogenesis of c-type cytochromes; once thought to export heme, this seems not to be the case, but its exact role is uncertain. Responsible for energy coupling to the transport system. This is Cytochrome c biogenesis ATP-binding export protein CcmA from Rhodopseudomonas palustris (strain HaA2).